The following is a 372-amino-acid chain: L-selectin (372 aa).

Positions 1-28 are cleaved as a signal peptide; sequence MIFPWKCQSTQRDLCNIFKLWGWTMLCC. The propeptide occupies 29 to 38; that stretch reads DFLAHHGTDC. Residues 39 to 332 lie on the Extracellular side of the membrane; that stretch reads WTYHYSEKPM…FSMIKEGDYN (294 aa). In terms of domain architecture, C-type lectin spans 55-155; that stretch reads RFCRENYTDL…ACHKLKAALC (101 aa). Disulfide bonds link cysteine 57–cysteine 155, cysteine 128–cysteine 147, cysteine 128–cysteine 160, cysteine 160–cysteine 171, cysteine 165–cysteine 180, cysteine 182–cysteine 191, cysteine 197–cysteine 241, cysteine 227–cysteine 254, cysteine 259–cysteine 303, and cysteine 289–cysteine 316. Asparagine 60 and asparagine 104 each carry an N-linked (GlcNAc...) asparagine glycan. Positions 118, 120, 126, 143, and 144 each coordinate Ca(2+). The EGF-like domain maps to 156–192; that stretch reads YTASCQPWSCSGHGECVEIINNYTCNCDVGYYGPQCQ. Asparagine 177 carries N-linked (GlcNAc...) asparagine glycosylation. Sushi domains follow at residues 195–256 and 257–318; these read IQCE…TCQV and IQCE…ICQK. Residues asparagine 216, asparagine 226, asparagine 232, asparagine 246, and asparagine 271 are each glycosylated (N-linked (GlcNAc...) asparagine). A helical transmembrane segment spans residues 333–355; sequence PLFIPVAVMVTAFSGLAFIIWLA. The Cytoplasmic portion of the chain corresponds to 356-372; it reads RRLKKGKKSKKSMDDPY.

The protein belongs to the selectin/LECAM family. As to quaternary structure, interaction with SELPLG/PSGL1 and PODXL2 is required for promoting recruitment and rolling of leukocytes. This interaction is dependent on the sialyl Lewis X glycan modification of SELPLG and PODXL2, and tyrosine sulfation modifications of SELPLG. Sulfation on 'Tyr-51' of SELPLG is important for L-selectin binding. In terms of processing, N-glycosylated.

It is found in the cell membrane. Calcium-dependent lectin that mediates cell adhesion by binding to glycoproteins on neighboring cells. Mediates the adherence of lymphocytes to endothelial cells of high endothelial venules in peripheral lymph nodes. Promotes initial tethering and rolling of leukocytes in endothelia. The polypeptide is L-selectin (SELL) (Pongo pygmaeus (Bornean orangutan)).